The sequence spans 1170 residues: Anion exchange protein 3 (1170 aa).

The Cytoplasmic portion of the chain corresponds to 1–656 (MGRSYNEKDF…DLKDALDTQC (656 aa)). 3 disordered regions span residues 17–96 (FHHT…PQLS), 112–167 (FHME…TTRG), and 239–267 (HLVK…RRKR). A compositionally biased stretch (basic residues) spans 32–53 (RFRKRVLSMDRRRKRKRKKKKT). Residues 67-76 (VDEEEAESEI) are compositionally biased toward acidic residues. A compositionally biased stretch (polar residues) spans 246–259 (RCQLPRSSNGSPPL). 5 consecutive transmembrane segments (helical) span residues 657 to 677 (IAAV…FGGL), 702 to 722 (FSLL…LLVF), 744 to 764 (IGFW…SFLV), 774 to 794 (IFAF…LIKV), and 828 to 848 (PNTA…AFFL). The membrane (anion exchange) stretch occupies residues 657–1170 (IAAVIFIYFA…DEYNEIHMLV (514 aa)). Topologically, residues 849 to 863 (RKLRNSRFLGGKVRR) are cytoplasmic. 5 helical membrane-spanning segments follow: residues 864 to 884 (VIGD…DILI), 919 to 939 (FPVW…ILIF), 966 to 986 (LLLI…WLTA), 1020 to 1063 (RVTG…LTGI), and 1104 to 1124 (IVLL…FILI).

The protein belongs to the anion exchanger (TC 2.A.31) family. In terms of tissue distribution, widely expressed at low levels.

Its subcellular location is the cell membrane. It catalyses the reaction hydrogencarbonate(in) + chloride(out) = hydrogencarbonate(out) + chloride(in). Sodium-independent anion exchanger which mediates the electroneutral exchange of chloride for bicarbonate ions across the cell membrane. May be involved in the regulation of intracellular pH, and the modulation of cardiac action potential. The polypeptide is Anion exchange protein 3 (Danio rerio (Zebrafish)).